A 3470-amino-acid polypeptide reads, in one-letter code: Mucin-4 (3470 aa).

A signal peptide spans 1 to 28 (MRGPHWRVPWLCLSCLYSCLLLLPDALA). The segment at 32 to 163 (TQTPMSLSSS…STESTSVDSG (132 aa)) is disordered. The span at 37–57 (SLSSSTRTSQMSSQASTSSTS) shows a compositional bias: low complexity. 24 O-linked (GalNAc...) threonine glycosylation sites follow: threonine 42, threonine 44, threonine 65, threonine 68, threonine 87, threonine 91, threonine 96, threonine 97, threonine 98, threonine 99, threonine 100, threonine 103, threonine 104, threonine 106, threonine 117, threonine 130, threonine 131, threonine 132, threonine 145, threonine 146, threonine 150, threonine 151, threonine 152, and threonine 155. The variable number of tandem repeats (VNTR) stretch occupies residues 43–2501 (RTSQMSSQAS…ETLINDFTSS (2459 aa)). Over residues 66 to 85 (EQTSTRDTPSSITTVSQSHH) the composition is skewed to polar residues. Residues 86–111 (TTSMETSKPQTTTTTEVTTSTPSASS) show a composition bias toward low complexity. The segment covering 112-129 (RDQIQTETSSQRTISPDG) has biased composition (polar residues). Residues 130–162 (TTTSHAPSISSSAPSTTHMLTTTSSTESTSVDS) are compositionally biased toward low complexity. Asparagine 188 is a glycosylation site (N-linked (GlcNAc...) asparagine). A compositionally biased stretch (polar residues) spans 199–220 (TLTQRQHTGSKQTSSKSQVNIV). 7 disordered regions span residues 199 to 679 (TLTQ…STVS), 691 to 925 (FPQS…NMST), 938 to 1219 (TLPQ…MSTV), 1232 to 1400 (LPQS…MSTV), 1413 to 1524 (LPQS…MSTV), 1537 to 1647 (LPKS…NMST), and 1660 to 1992 (TLPQ…TEIT). Low complexity predominate over residues 221 to 232 (TSTLSTSTSDST). Over residues 233–243 (PAQTMSQVTSS) the composition is skewed to polar residues. 2 O-linked (GalNAc...) threonine glycosylation sites follow: threonine 236 and threonine 241. The span at 251–272 (STSGVSSTSLTTTEVLTQTSST) shows a compositional bias: low complexity. Polar residues predominate over residues 273–283 (DSAPGNTTLRI). N-linked (GlcNAc...) asparagine glycans are attached at residues asparagine 278 and asparagine 286. Residues 284 to 299 (TQNSTTHTTKVSTTST) show a composition bias toward low complexity. Threonine 297 is a glycosylation site (O-linked (GalNAc...) threonine). Positions 300–335 (PQKLSPVSTLINSSQKMSTLPQNQHTESMDTSRQPQ) are enriched in polar residues. A glycan (N-linked (GlcNAc...) asparagine) is linked at asparagine 311. Residues 336-346 (TTTTIEVTTST) are compositionally biased toward low complexity. The segment covering 347-448 (PSASSLHQIQ…LTSSYSQHIQ (102 aa)) has biased composition (polar residues). O-linked (GalNAc...) threonine glycosylation is found at threonine 357, threonine 370, threonine 371, threonine 372, threonine 385, and threonine 423. Residues 449-470 (SKGTSSKSQTTTNTKVNTSTPS) are compositionally biased toward low complexity. An N-linked (GlcNAc...) asparagine glycan is attached at asparagine 465. Over residues 479-489 (TETSSQRTNSP) the composition is skewed to polar residues. O-linked (GalNAc...) threonine glycosylation is present at threonine 494. Over residues 496–510 (HAPSMSSSAPSTTHM) the composition is skewed to low complexity. Polar residues predominate over residues 511-577 (LSTTSSNQST…SQSQHTGSKG (67 aa)). A glycan (O-linked (GalNAc...) threonine) is linked at threonine 513. The N-linked (GlcNAc...) asparagine glycan is linked to asparagine 517. Residues threonine 542 and threonine 545 are each glycosylated (O-linked (GalNAc...) threonine). Asparagine 550 carries an N-linked (GlcNAc...) asparagine glycan. 18 O-linked (GalNAc...) threonine glycosylation sites follow: threonine 551, threonine 584, threonine 585, threonine 586, threonine 587, threonine 588, threonine 592, threonine 594, threonine 599, threonine 605, threonine 618, threonine 619, threonine 620, threonine 633, threonine 634, threonine 639, threonine 640, and threonine 655. Residues 578-599 (TSSNPQTTTTTEVTTSTPSATT) are compositionally biased toward low complexity. Polar residues predominate over residues 600–631 (HDQIQTETSSQNTISPGETTTSYAPIMSSSAP). Over residues 632 to 647 (STTHMLSTTSSTQSTS) the composition is skewed to low complexity. Composition is skewed to polar residues over residues 653–679 (TTTL…STVS) and 691–701 (FPQSQHTGSKG). An N-linked (GlcNAc...) asparagine glycan is attached at asparagine 674. 6 O-linked (GalNAc...) threonine glycosylation sites follow: threonine 702, threonine 708, threonine 709, threonine 710, threonine 711, and threonine 716. A compositionally biased stretch (low complexity) spans 702 to 723 (TSSNPQTTTTPVVTTSNPSATS). N-linked (GlcNAc...) asparagine glycosylation is present at asparagine 718. The span at 724 to 741 (RDQIQTETSSQRTISPGE) shows a compositional bias: polar residues. Positions 742–772 (TTTSYASIMSSSAPSTTHMLTTTSSTQSTSV) are enriched in low complexity. O-linked (GalNAc...) threonine glycosylation is found at threonine 743, threonine 744, threonine 757, and threonine 758. Residues 780–824 (VRTQGSTPATTQVSPSSQNMSTVSTPITSTQILSTLPQSQHTGSK) show a composition bias toward polar residues. Asparagine 798 carries an N-linked (GlcNAc...) asparagine glycan. A compositionally biased stretch (low complexity) spans 825–848 (GTSSNPQTTTSPVVTTSTPSGTSG). O-linked (GalNAc...) threonine glycosylation is found at threonine 826, threonine 832, threonine 833, threonine 834, threonine 839, threonine 840, threonine 842, threonine 846, and threonine 853. Residues 849-879 (DQIQTETSSQRTISPGKTTTSHALNINSSAP) show a composition bias toward polar residues. A glycan (N-linked (GlcNAc...) asparagine) is linked at asparagine 875. A compositionally biased stretch (low complexity) spans 880-895 (STTHMLSTTSSTQSTS). Threonine 901 and threonine 902 each carry an O-linked (GalNAc...) threonine glycan. Residues 901 to 925 (TTAGRTQGSTPATTQVSPSSQNMST) show a composition bias toward polar residues. N-linked (GlcNAc...) asparagine glycosylation occurs at asparagine 922. Positions 948-968 (KSTSTNPQTTTTPEVTTSNPS) are enriched in low complexity. Threonine 950, threonine 952, threonine 956, threonine 957, threonine 958, threonine 959, threonine 963, and threonine 964 each carry an O-linked (GalNAc...) threonine glycan. An N-linked (GlcNAc...) asparagine glycan is attached at asparagine 966. The segment covering 969–1003 (ATSHDQIETETSSQRTISPGETTTSYAPIMSSSAP) has biased composition (polar residues). O-linked (GalNAc...) threonine glycosylation is found at threonine 990, threonine 991, threonine 992, threonine 1005, threonine 1006, threonine 1011, threonine 1012, and threonine 1015. The span at 1004–1019 (STTHMLSTTSSTQSTS) shows a compositional bias: low complexity. Positions 1020–1065 (VDTRNTTTLTTQGSTPATTQVSPSSKNMSTVSTPITSTHKLSTLPQ) are enriched in polar residues. Asparagine 1024 carries N-linked (GlcNAc...) asparagine glycosylation. O-linked (GalNAc...) threonine glycosylation is found at threonine 1025, threonine 1026, threonine 1027, threonine 1029, and threonine 1038. N-linked (GlcNAc...) asparagine glycosylation is found at asparagine 1046, asparagine 1072, and asparagine 1091. Residues 1066 to 1083 (SQHTGSNGTSSSSSTPAT) show a composition bias toward low complexity. The segment covering 1091–1120 (NMSTVSTPITTTHKLSTLSQSQHTGSKGTS) has biased composition (polar residues). The span at 1121–1140 (SNPQTTTTPVMTTSTPSATT) shows a compositional bias: low complexity. O-linked (GalNAc...) threonine glycosylation is found at threonine 1125, threonine 1126, threonine 1127, threonine 1128, threonine 1132, threonine 1133, threonine 1135, threonine 1140, threonine 1174, threonine 1198, and threonine 1207. Composition is skewed to polar residues over residues 1141–1219 (HDQI…MSTV) and 1232–1242 (LPQSQHTGSKG). Asparagine 1215 carries N-linked (GlcNAc...) asparagine glycosylation. Threonine 1243, threonine 1245, threonine 1249, threonine 1250, threonine 1251, threonine 1252, threonine 1256, threonine 1257, threonine 1259, threonine 1263, threonine 1270, threonine 1283, threonine 1284, threonine 1285, threonine 1298, threonine 1299, threonine 1304, threonine 1305, threonine 1318, and threonine 1319 each carry an O-linked (GalNAc...) threonine glycan. Residues 1243-1264 (TSTNPQTTTTPEVTTSTPSATS) show a composition bias toward low complexity. Polar residues predominate over residues 1265–1296 (RDQIQTETSSQRTISPGETTTSHAPIMSSSAP). Over residues 1297-1312 (STTHMLSTTSSTQSTS) the composition is skewed to low complexity. Positions 1318-1353 (TTAGRTQGSTPATTQVSPSSQNMTTTSHALMSSSAP) are enriched in polar residues. Asparagine 1339 carries an N-linked (GlcNAc...) asparagine glycan. O-linked (GalNAc...) threonine glycans are attached at residues threonine 1341, threonine 1342, threonine 1355, threonine 1356, threonine 1365, threonine 1368, threonine 1372, threonine 1375, threonine 1376, threonine 1377, and threonine 1379. The segment covering 1354–1390 (STTHMLSTTSSTQSTSVDTRHTTTVTTQGSTPATTQV) has biased composition (low complexity). 2 stretches are compositionally biased toward polar residues: residues 1391-1400 (LPSSQNMSTV) and 1413-1477 (LPQS…SSAP). The N-linked (GlcNAc...) asparagine glycan is linked to asparagine 1396. O-linked (GalNAc...) threonine glycans are attached at residues threonine 1426, threonine 1430, threonine 1431, threonine 1440, threonine 1451, threonine 1453, threonine 1464, threonine 1465, and threonine 1466. Asparagine 1471 carries N-linked (GlcNAc...) asparagine glycosylation. The span at 1478 to 1489 (STTHMLSSTSST) shows a compositional bias: low complexity. 4 O-linked (GalNAc...) threonine glycosylation sites follow: threonine 1479, threonine 1480, threonine 1499, and threonine 1512. Polar residues-rich tracts occupy residues 1490-1524 (QITS…MSTV) and 1537-1553 (LPKS…SNPQ). The N-linked (GlcNAc...) asparagine glycan is linked to asparagine 1520. O-linked (GalNAc...) threonine glycans are attached at residues threonine 1554, threonine 1555, threonine 1557, and threonine 1562. The segment covering 1554–1569 (TTITPVVTTSTPSASS) has biased composition (low complexity). Positions 1570–1587 (RDQIQTETSFQRTISPGE) are enriched in polar residues. O-linked (GalNAc...) threonine glycosylation is found at threonine 1588, threonine 1589, threonine 1590, threonine 1604, threonine 1609, threonine 1627, threonine 1635, and threonine 1636. Residues 1588–1609 (TTTSHAPSMSSSAPSSTHMLST) are compositionally biased toward low complexity. A compositionally biased stretch (polar residues) spans 1610 to 1647 (ASSTQITSVDTRHTTAITTQGSTPATTQVSPSSQNMST). The N-linked (GlcNAc...) asparagine glycan is linked to asparagine 1644. A compositionally biased stretch (low complexity) spans 1670–1693 (KSTSTNPQTTTTPRVTTSTPSASS). O-linked (GalNAc...) threonine glycosylation is found at threonine 1672, threonine 1674, threonine 1678, threonine 1679, threonine 1680, threonine 1681, threonine 1685, threonine 1686, threonine 1688, threonine 1699, and threonine 1714. Residues 1694-1725 (RDQIQTETSSQRTISPGKTTTSHVPNMNSSAP) are compositionally biased toward polar residues. Asparagine 1721 carries an N-linked (GlcNAc...) asparagine glycan. Low complexity predominate over residues 1726-1742 (STTHILSTTSSIQSTSG). Residues 1747–1837 (TTAVRTQGST…SSQRTISPGE (91 aa)) are compositionally biased toward polar residues. N-linked (GlcNAc...) asparagine glycosylation is present at asparagine 1770. O-linked (GalNAc...) threonine glycans are attached at residues threonine 1838, threonine 1839, threonine 1840, threonine 1854, threonine 1873, threonine 1874, threonine 1888, threonine 1889, and threonine 1891. A compositionally biased stretch (low complexity) spans 1838 to 1859 (TTTSHASSLSSSAPSSTHMLST). A compositionally biased stretch (polar residues) spans 1860–1877 (ASSTEITSGDTRHTTAIV). A compositionally biased stretch (low complexity) spans 1878 to 1895 (TQGSTPATTQTTLTPSSQ). Asparagine 1896 carries N-linked (GlcNAc...) asparagine glycosylation. Residues 1896–1927 (NMSTVSTPITSTHKLSPLPQSQHTENMGTSSN) are compositionally biased toward polar residues. The span at 1928–1945 (PQTTTTPEVTTSTPSATS) shows a compositional bias: low complexity. O-linked (GalNAc...) threonine glycans are attached at residues threonine 1930, threonine 1931, threonine 1932, threonine 1933, threonine 1937, threonine 1938, threonine 1940, threonine 1964, threonine 1965, threonine 1966, and threonine 1980. Polar residues predominate over residues 1946–1992 (YDQIQTETSFQRTISPGETTTSHAPSMSNSAPSSTHKLSTASSTEIT). Asparagine 2022 carries N-linked (GlcNAc...) asparagine glycosylation. Over residues 2037–2055 (STLRQSQHTGSKGTSSNHQ) the composition is skewed to polar residues. Disordered stretches follow at residues 2037-2107 (STLR…NTTH), 2139-2185 (QVSL…NITP), 2205-2237 (TMSW…ILTS), and 2262-2368 (TSTS…TVPL). Residues threonine 2056 and threonine 2057 are each glycosylated (O-linked (GalNAc...) threonine). Over residues 2056 to 2071 (TTTTPVVTTSTSSATS) the composition is skewed to low complexity. The segment covering 2072–2089 (RDQIQTETSSLRTISPDG) has biased composition (polar residues). O-linked (GalNAc...) threonine glycans are attached at residues threonine 2090, threonine 2091, and threonine 2092. Residues 2090 to 2107 (TTTSHASSMSSSSPNTTH) show a composition bias toward low complexity. A glycan (N-linked (GlcNAc...) asparagine) is linked at asparagine 2104. O-linked (GalNAc...) threonine glycosylation is found at threonine 2105 and threonine 2106. Asparagine 2148, asparagine 2182, and asparagine 2225 each carry an N-linked (GlcNAc...) asparagine glycan. Composition is skewed to polar residues over residues 2205–2229 (TMSW…TSPA) and 2262–2303 (TSTS…QTSI). 5 O-linked (GalNAc...) threonine glycosylation sites follow: threonine 2264, threonine 2352, threonine 2354, threonine 2359, and threonine 2360. Residues 2344–2367 (TAVSATSSTLTSPSPTTASRSTVP) are compositionally biased toward low complexity. Positions 2458-2613 (PFWADADFSS…GLQVYRLHRE (156 aa)) constitute an NIDO domain. One can recognise an AMOP domain in the interval 2614-2726 (ERPNYRLKCL…SFCVWYQLRR (113 aa)). Positions 2738–2937 (RPAWTFGDPH…TWHVNGTGLL (200 aa)) constitute a VWFD domain. N-linked (GlcNAc...) asparagine glycosylation is found at asparagine 2755, asparagine 2773, asparagine 2801, asparagine 2827, asparagine 2844, asparagine 2853, asparagine 2888, asparagine 2909, asparagine 2916, asparagine 2932, asparagine 2958, asparagine 2985, asparagine 3003, asparagine 3014, asparagine 3054, asparagine 3079, asparagine 3102, asparagine 3109, asparagine 3157, and asparagine 3174. An EGF-like 1 domain is found at 3173-3212 (PNRSCPMNYCYNNGHCDISEAPGCQPTCTCPPAFTDNRCF). 3 disulfide bridges follow: cysteine 3177–cysteine 3188, cysteine 3182–cysteine 3200, and cysteine 3202–cysteine 3211. 3 N-linked (GlcNAc...) asparagine glycosylation sites follow: asparagine 3240, asparagine 3247, and asparagine 3353. The EGF-like 2 domain maps to 3382–3421 (VSPCSEGYCHNGGQCKHLPDGPQCSCASFTIYSSSGEHCE). Cystine bridges form between cysteine 3385–cysteine 3396, cysteine 3390–cysteine 3405, and cysteine 3407–cysteine 3420. The chain crosses the membrane as a helical span at residues 3432 to 3452 (GILFGTLGALLLLGILAFMIF).

In terms of assembly, a heterodimeric complex, composed of a mucin-4 alpha chain and a cysteine-rich transmembrane mucin-4 beta chain. Mucin-4 beta chain interacts with ERBB2 via the EGF-like domain 1. In nonpolarized cells, associates with ERBB2 and ERBB3. Proteolytically cleaved into 2 chains, mucin-4 alpha chain and mucin-4 beta chain. Post-translationally, highly O-glycosylated. In terms of processing, predominantly N-glycosylated. As to expression, expressed in trachea, duodenum and intestine. Lower expression in stomach, salivary glands, liver, gallbladder, and kidney.

The protein resides in the cell membrane. The protein localises to the secreted. Membrane-bound mucin, a family of highly glycosylated proteins that constitute the major component of the mucus, the slimy and viscous secretion covering epithelial surfaces. These glycoproteins play important roles in the protection of the epithelium and are implicated in epithelial renewal and differentiation. Regulates cellular behavior through both anti-adhesive effects on cell-cell and cell-extracellular matrix interactions and its ability to act as an intramembrane ligand for ERBB2. Plays an important role in proliferation and differentiation of epithelial cells by inducing specific phosphorylation of ERBB2. In polarized epithelial cells, segregates ERBB2 and other ERBB receptors and prevents ERBB2 from acting as a coreceptor. The interaction with ERBB2 leads to enhanced expression of CDKN1B. The formation of a MUC4-ERBB2-ERBB3-NRG1 complex leads to down-regulation of CDKN1B, resulting in repression of apoptosis and stimulation of proliferation. Its ability to promote tumor growth may be mainly due to repression of apoptosis as opposed to proliferation. The polypeptide is Mucin-4 (Muc4) (Mus musculus (Mouse)).